We begin with the raw amino-acid sequence, 166 residues long: Dynein regulatory complex protein 8 (166 aa).

One can recognise an EF-hand domain in the interval 95–130; that stretch reads DDYHTLLRAFRAFDPDGRGFIDAESFKSLLTGKGEA.

This sequence belongs to the DRC8 family. In terms of assembly, component of the nexin-dynein regulatory complex (N-DRC).

The protein localises to the cytoplasm. The protein resides in the cytoskeleton. It is found in the flagellum axoneme. In terms of biological role, component of the nexin-dynein regulatory complex (N-DRC), a key regulator of ciliary/flagellar motility which maintains the alignment and integrity of the distal axoneme and regulates microtubule sliding in motile axonemes. This chain is Dynein regulatory complex protein 8, found in Chlamydomonas reinhardtii (Chlamydomonas smithii).